A 353-amino-acid chain; its full sequence is Ubiquinol oxidase 1, mitochondrial (353 aa).

A mitochondrion-targeting transit peptide spans 1–69 (MMTRGATRMT…RHFPVMGSRS (69 aa)). The interval 77-99 (DKQHDKKAENGSAAATGGGDGGD) is disordered. A helical transmembrane segment spans residues 178 to 198 (AMMLETVAAVPGMVGGMLLHC). The Fe cation site is built by Glu-182, Glu-221, and His-224. A helical transmembrane segment spans residues 240 to 260 (ALVFAVQGVFFNAYFVTYLLS). The Fe cation site is built by Glu-272, Glu-323, and His-326.

Belongs to the alternative oxidase family. As to quaternary structure, homodimer; disulfide-linked. Fe cation serves as cofactor.

The protein resides in the mitochondrion inner membrane. It catalyses the reaction 2 a ubiquinol + O2 = 2 a ubiquinone + 2 H2O. Stimulated by reduction of the disulfide bond and the presence of pyruvate. In terms of biological role, catalyzes the cyanide-resistant oxidation of ubiquinol and the reduction of molecular oxygen to water, but does not translocate protons and consequently is not linked to oxidative phosphorylation. May increase respiration when the cytochrome respiratory pathway is restricted, or in response to low temperatures. This is Ubiquinol oxidase 1, mitochondrial (AOX1) from Nicotiana tabacum (Common tobacco).